We begin with the raw amino-acid sequence, 370 residues long: Alpha-ketoglutarate-dependent dioxygenase cnsP (370 aa).

A compositionally biased stretch (low complexity) spans 1 to 12 (MSTTTVITPGTI). The interval 1–20 (MSTTTVITPGTITREKNENG) is disordered. Position 131 (His131) interacts with substrate. Fe cation contacts are provided by His169 and Asp171. Thr197 serves as a coordination point for 2-oxoglutarate. Residue His321 participates in Fe cation binding. 2-oxoglutarate is bound by residues Arg333 and Arg337. Position 337 (Arg337) interacts with substrate.

This sequence belongs to the TfdA dioxygenase family. Fe(2+) is required as a cofactor.

It functions in the pathway alkaloid biosynthesis. In terms of biological role, alpha-ketoglutarate-dependent dioxygenase; part of the gene cluster that mediates the biosynthesis of communesins, a prominent class of indole alkaloids with great potential as pharmaceuticals. Communesins are biosynthesized by the coupling of tryptamine and aurantioclavine, two building blocks derived from L-tryptophan. The L-tryptophan decarboxylase cnsB converts L-tryptophan to tryptamine, whereas the tryptophan dimethylallyltransferase cnsF converts L-tryptophan to 4-dimethylallyl tryptophan which is further transformed to aurantioclavine by the aurantioclavine synthase cnsA, probably aided by the catalase cnsD. The cytochrome P450 monooxygenase cnsC catalyzes the heterodimeric coupling between the two different indole moieties, tryptamine and aurantioclavine, to construct vicinal quaternary stereocenters and yield the heptacyclic communesin scaffold. The O-methyltransferase cnsE then methylates the communesin scaffold to produce communesin K, the simplest characterized communesin that contains the heptacyclic core. The dioxygenase cnsJ converts communesin K into communesin I. Acylation to introduce the hexadienyl group at position N16 of communesin I by the acyltransferase cnsK leads to the production of communesin B. The hexadienyl group is produced by the highly reducing polyketide synthase cnsI, before being hydrolytically removed from cnsI by the serine hydrolase cnsH, converted into hexadienyl-CoA by the CoA ligase cnsG, and then transferred to communesin I by cnsK. Surprisingly, cnsK may also be a promiscuous acyltransferase that can tolerate a range of acyl groups, including acetyl-, propionyl-, and butyryl-CoA, which lead to communesins A, G and H respectively. The roles of the alpha-ketoglutarate-dependent dioxygenases cnsM and cnsP have still to be determined. The polypeptide is Alpha-ketoglutarate-dependent dioxygenase cnsP (Penicillium expansum (Blue mold rot fungus)).